The following is a 541-amino-acid chain: MSTNLLRLILLFITLSITSSLSTPSPADSPPYLWPLPAEFSFGNETLSVDPTVTLIVAGNGGGSLIIRAAFDRYMGIIFKHASGRGSLLSRIRFLKMVEYDITSLKIVVHSDSEELQLGVDESYTLMVSKKNEQSIVGAATIEANTVYGALRGLETFSQLCAFDYITKSVQIYKAPWYIQDKPRFGYRGLLIDTSRHYLPIDVIKQIIESMSFAKLNVLHWHIVDEQSFPLETPTYPNLWKGAYSRWERYTVEDASEIVRFAKMRGINVMAEVDVPGHAESWGTGYPDLWPSLSCREPLDVTKNFTFDVISGILADMRKIFPFELFHLGGDEVNTDCWKNTTHVKEWLQGRNFTTKDAYKYFVLRAQQIAISKNWTPVNWEETFSSFGKDLDPRTVIQNWLVSDICQKAVAKGFRCIFSNQGYWYLDHLDVPWEEVYNTEPLNGIEDPSLQKLVIGGEVCMWGETADTSVVLQTIWPRAAAAAERMWSTREAVSKGNITLTALPRLHYFRCLLNNRGVPAAPVDNFYARRPPLGPGSCYAQ.

The N-terminal stretch at 1 to 20 (MSTNLLRLILLFITLSITSS) is a signal peptide. Asparagine 44 and asparagine 304 each carry an N-linked (GlcNAc...) asparagine glycan. Cysteine 295 and cysteine 337 are oxidised to a cystine. Glutamate 332 acts as the Proton donor in catalysis. Asparagine 340, asparagine 352, and asparagine 497 each carry an N-linked (GlcNAc...) asparagine glycan. Residues cysteine 511 and cysteine 538 are joined by a disulfide bond.

Belongs to the glycosyl hydrolase 20 family. In terms of processing, N-glycosylated. In terms of tissue distribution, expressed in roots, leaves, stems, flowers and siliques.

Its subcellular location is the vacuole. It catalyses the reaction Hydrolysis of terminal non-reducing N-acetyl-D-hexosamine residues in N-acetyl-beta-D-hexosaminides.. With respect to regulation, inhibited by N-acetylcastanospermine, 2-acet-amido-1,2-dideoxynojirimycin and PUGNAc. Functionally, has a broad substrate specificity. Can use synthetic substrates such as pyridylaminated chitotriose, pyridylaminated chitobiose, p-nitrophenyl-beta-N-acetylglucosaminide, p-nitrophenyl-2-acetamido-2-deoxy-beta-D-glucopyranoside (pNP-GlcNAc), p-nitrophenyl-2-acetamido-2-deoxy-beta-D-galactopyranoside (pNP-GalNAc), 4-methylumbelliferyl-2-acetamido-2-deoxy-beta-D-glucopyranoside (MU-GlcNAc), and 4-methylumbelliferyl-6-sulfo-2-acetamido-2-deoxy-beta-D-glucopyranoside (MU-GlcNAc-6SO(4)) as substrates. Removes terminal GlcNAc residues from alpha1,3- and alpha1,6-mannosyl branches of biantennary N-glycans without any strict branch preference. Required for the presence of paucimannosidic N-glycans in glycoproteins of roots and, to a lower extent, of leaves. The protein is Beta-hexosaminidase 1 (HEXO1) of Arabidopsis thaliana (Mouse-ear cress).